Here is a 520-residue protein sequence, read N- to C-terminus: Cyclin-L2 (520 aa).

An N-acetylalanine modification is found at Ala-2. Cyclin-like stretches follow at residues 83-185 (ELIQ…RVLK) and 198-282 (KIIV…KILQ). The disordered stretch occupies residues 316-520 (LPGGTQVLDG…DHPGHSRHRR (205 aa)). Ser-330, Ser-338, Ser-348, and Ser-351 each carry phosphoserine. A compositionally biased stretch (basic and acidic residues) spans 357-367 (RRLEGAKKAKA). Ser-369 carries the post-translational modification Phosphoserine. The segment covering 376–390 (KGRESRSRSRSREQS) has biased composition (basic and acidic residues). The tract at residues 385–423 (RSREQSYSRSPSRSASPKRRKSDSGSTSGGSKSQSRSRS) is RS. Positions 408–436 (SGSTSGGSKSQSRSRSRSDSPPRQAPRSA) are enriched in low complexity. A compositionally biased stretch (basic and acidic residues) spans 441-454 (SEIRGSRKSKDCKY). Residues 456–471 (QKPHKSRSRSSSRSRS) show a composition bias toward basic residues. Composition is skewed to basic and acidic residues over residues 472–481 (RSRERADNPG) and 489–514 (YYRD…DHPG).

The protein belongs to the cyclin family. Cyclin L subfamily. As to quaternary structure, interacts with CDK11A, CDK11B, CDK12, CDK13 and POLR2A, the hyperphosphorylated C-terminal domain (CTD) of RNA polymerase II. May form a ternary complex with CDK11B and casein kinase II (CKII). Interacts with pre-mRNA-splicing factors, including at least SRSF1, SRSF2 AND SRSF7/SLU7. As to expression, widely expressed.

The protein resides in the nucleus speckle. The protein localises to the nucleus. Its subcellular location is the nucleoplasm. In terms of biological role, involved in pre-mRNA splicing. May induce cell death, possibly by acting on the transcription and RNA processing of apoptosis-related factors. The protein is Cyclin-L2 (CCNL2) of Homo sapiens (Human).